A 714-amino-acid polypeptide reads, in one-letter code: Polyribonucleotide nucleotidyltransferase (714 aa).

Asp-496 and Asp-502 together coordinate Mg(2+). Residues 562–621 enclose the KH domain; sequence PRLLTIKIDPDLIGMVIGPGGKTIKGITEQTRAKVDIADDGTVTIASSESENAEKAKRLI. Residues 631-699 enclose the S1 motif domain; that stretch reads GDVYFGKVTR…NKGRINLTRL (69 aa).

This sequence belongs to the polyribonucleotide nucleotidyltransferase family. Mg(2+) serves as cofactor.

Its subcellular location is the cytoplasm. The catalysed reaction is RNA(n+1) + phosphate = RNA(n) + a ribonucleoside 5'-diphosphate. Its function is as follows. Involved in mRNA degradation. Catalyzes the phosphorolysis of single-stranded polyribonucleotides processively in the 3'- to 5'-direction. The protein is Polyribonucleotide nucleotidyltransferase of Picosynechococcus sp. (strain ATCC 27264 / PCC 7002 / PR-6) (Agmenellum quadruplicatum).